The following is a 127-amino-acid chain: Fluoride-specific ion channel FluC (127 aa).

Transmembrane regions (helical) follow at residues 7–27 (LFLISCGASLGAMSRHGLTLL), 37–57 (FGTLIANYIGCLIMGIMLAMF), 70–90 (FFVTGFLGSLTTFSAFSAEVI), and 102–122 (ITITSLHILGCLFFTTLGVFI). Residues glycine 77 and threonine 80 each contribute to the Na(+) site.

This sequence belongs to the fluoride channel Fluc/FEX (TC 1.A.43) family.

It is found in the cell inner membrane. It carries out the reaction fluoride(in) = fluoride(out). Its activity is regulated as follows. Na(+) is not transported, but it plays an essential structural role and its presence is essential for fluoride channel function. Its function is as follows. Fluoride-specific ion channel. Important for reducing fluoride concentration in the cell, thus reducing its toxicity. This Histophilus somni (strain 129Pt) (Haemophilus somnus) protein is Fluoride-specific ion channel FluC.